The following is a 173-amino-acid chain: Lactoylglutathione lyase (173 aa).

The VOC domain maps to 24–170 (VFNHTMLRVK…DGYWVEVIQP (147 aa)). H27 serves as a coordination point for Ni(2+). Substrate is bound at residue R31. Residue E93 participates in Ni(2+) binding. Substrate-binding residues include N97, R116, and H120. Residues H120 and E166 each coordinate Ni(2+). E166 acts as the Proton donor/acceptor in catalysis.

It belongs to the glyoxalase I family. As to quaternary structure, monomer. Requires Ni(2+) as cofactor. The cofactor is Zn(2+).

The enzyme catalyses (R)-S-lactoylglutathione = methylglyoxal + glutathione. It functions in the pathway secondary metabolite metabolism; methylglyoxal degradation; (R)-lactate from methylglyoxal: step 1/2. Its function is as follows. Catalyzes the conversion of hemimercaptal, formed from methylglyoxal and glutathione, to S-lactoylglutathione. In Pseudomonas putida (Arthrobacter siderocapsulatus), this protein is Lactoylglutathione lyase (gloA).